A 948-amino-acid chain; its full sequence is ATPase 2, plasma membrane-type (948 aa).

Serine 2 carries the post-translational modification N-acetylserine. Over 2–61 (SSLEDIKNETVDLEKIPIEEVFQQLKCSREGLTTQEGEDRIQIFGPNKLEEKKESKLLKF) the chain is Cytoplasmic. The chain crosses the membrane as a helical span at residues 62 to 81 (LGFMWNPLSWVMEMAAIMAI). Over 82–93 (ALANGDGRPPDW) the chain is Extracellular. Residues 94-114 (QDFVGIICLLVINSTISFIEE) form a helical membrane-spanning segment. Residues 115-243 (NNAGNAAAAL…GHFQKVLTAI (129 aa)) are Cytoplasmic-facing. The helical transmembrane segment at 244–264 (GNFCICSIAIGMVIEIIVMYP) threads the bilayer. Residues 265–273 (IQRRKYRDG) lie on the Extracellular side of the membrane. The helical transmembrane segment at 274–291 (IDNLLVLLIGGIPIAMPT) threads the bilayer. Residues 292–643 (VLSVTMAIGS…TSRAIFQRMK (352 aa)) lie on the Cytoplasmic side of the membrane. The active-site 4-aspartylphosphate intermediate is aspartate 329. Residues aspartate 588 and aspartate 592 each contribute to the Mg(2+) site. The chain crosses the membrane as a helical span at residues 644 to 665 (NYTIYAVSITIRIVFGFMLIAL). The Extracellular segment spans residues 666-670 (IWEFD). The helical transmembrane segment at 671–693 (FSAFMVLIIAILNDGTIMTISKD) threads the bilayer. Residues 694-709 (RVKPSPTPDSWKLKEI) are Cytoplasmic-facing. Residues 710–730 (FATGVVLGGYQAIMTVIFFWA) form a helical membrane-spanning segment. Over 731–751 (AHKTDFFSDTFGVRSIRDNNH) the chain is Extracellular. A helical membrane pass occupies residues 752–772 (ELMGAVYLQVSIISQALIFVT). Residues 773 to 784 (RSRSWSFVERPG) lie on the Cytoplasmic side of the membrane. Residues 785 to 805 (ALLMIAFLIAQLIATLIAVYA) form a helical membrane-spanning segment. Residues 806 to 813 (NWEFAKIR) lie on the Extracellular side of the membrane. Residues 814–834 (GIGWGWAGVIWLYSIVTYFPL) form a helical membrane-spanning segment. The Cytoplasmic segment spans residues 835-948 (DVFKFAIRYI…DIETPSHYTV (114 aa)). Threonine 881 carries the phosphothreonine modification. The residue at position 899 (serine 899) is a Phosphoserine. A Phosphoserine; by CIPK11 modification is found at serine 931. The interaction with 14-3-3 proteins stretch occupies residues 946 to 948 (YTV). A Phosphothreonine modification is found at threonine 947.

The protein belongs to the cation transport ATPase (P-type) (TC 3.A.3) family. Type IIIA subfamily. Binds to 14-3-3 proteins. The binding is induced by phosphorylation of Thr-947 and it activates the H(+)-ATPase. Interacts (via the R-domain) with PSY1R (via C-terminus). Part of a functional complex containing PSKR1, BAK1, CNGC17, and AHA. Interacts with CNGC17 and PSKR1. Interacts with PP2C67/PP2C-D1 at the plasma membrane. Interacts with AHA1. Post-translationally, phosphorylated, probably by PHOT1 and PHOT2, at C-terminal Thr-947 in guard cells in response to blue light to induce stomatal opening. In terms of processing, phosphorylation at Thr-881 by PSY1R. This phosphorylation activates proton pumping. Decreased phosphorylation in response to flg22 elicitation. Phosphorylation at Ser-899 is specifically induced by RALF1, thus leading to the inhibition of proton transport. Increased phosphorylation in response to flg22 elicitation. Post-translationally, phosphorylation of Thr-947 induces the binding to 14-3-3 proteins, but phosphorylation of Ser-931 interferes with this binding no matter whether Thr-947 is phosphorylated or not. Decreased phosphorylation in response to flg22 elicitation. Phosphorylation of Thr-947 is enhanced by the presence of brassinolide (BL) via the BRI1-BIN2 pathway and prior the trigger of hypocotyl elongation. Inactivated by PP2C67/PP2C-D1-mediated Thr-947 dephosphorylation; SAUR19 inhibits the action of PP2C67/PP2C-D1 and thus promotes the active phosphorylated form. In terms of processing, abscisic acid induces dephosphorylation of AHA2 in etiolated seedlings, suppressing ATP hydrolysis and hypocotyl elongation. In terms of tissue distribution, higher levels in roots than in shoots. Expressed in epidermal and root cortex cells, in phloem, xylem and root hairs. Detected in cotyledons, leaves, hypocotyls, roots and root hairs. Expressed in guard cells and mesophyll cells.

Its subcellular location is the cell membrane. The catalysed reaction is ATP + H2O + H(+)(in) = ADP + phosphate + 2 H(+)(out). With respect to regulation, regulated by an auto-inhibitory C-terminal domain that can be displaced by phosphorylation of Thr-947 and the subsequent binding of 14-3-3 proteins. Negatively regulated by PKS5. PKS5 phosphorylates Ser-931, inhibiting interaction with the activating 14-3-3 protein. Positively regulated by PSY1R. PSY1R phosphorylates Thr-881, situated in the auto-inhibitory region I of the C-terminal domain, causing pump activation. Negatively regulated by the secreted peptide RALF. After specific binding to FERONIA, RALF causes phosphorylation at Ser-899, mediating the inhibition of proton transport. Activated by lysophospholipids, without the involvement of phosphorylation of Thr-947. This activation is critically dependent on the single autoinhibitory residue Leu-919. Repressed by PP2C-D phosphatases (e.g. PP2C67/PP2C-D1 and PP2C64/PP2C-D5) which dephosphorylates Thr-947. Triggered by SAUR19 via phosphorylation of the C-terminal autoinhibitory domain (e.g. Thr-947), as a result of the inhibition of PP2C67/PP2C-D1. Phosphorylation on Thr residues is repressed by tyrphostin 9, sphingosine, GW5074 and BML-265. By contrast, the fungal phytotoxin fusicoccin (FC) promotes phosphorylation of Thr-947 independently to BHP, thus leading to large stomatal opening. Functionally, the plasma membrane H(+) ATPase of plants and fungi generates a proton gradient that drives the active transport of nutrients by H(+)-symport. The resulting external acidification and/or internal alkinization may mediate growth responses. Involved in maintaining the membrane potential and delta-pH, together forming the plasma membrane protonmotive force (PMF) required for root and hypocotyl elongation and root tropism. Important for root growth and development during different nitrogen regimes. Forms a functional cation-translocating unit with CNGC17 that is activated by PSKR1/BAK1 and possibly other BAK1/RLK complexes. Promotes stomatal opening in response to blue light. This is ATPase 2, plasma membrane-type from Arabidopsis thaliana (Mouse-ear cress).